A 473-amino-acid polypeptide reads, in one-letter code: Bifunctional protein GlmU (473 aa).

A pyrophosphorylase region spans residues 1 to 241 (MATQPTPLTA…VGSLVGINDR (241 aa)). UDP-N-acetyl-alpha-D-glucosamine is bound by residues 13 to 16 (LAAG), lysine 27, glutamine 84, and 89 to 90 (GT). Position 114 (aspartate 114) interacts with Mg(2+). Glycine 152, glutamate 167, asparagine 182, and asparagine 239 together coordinate UDP-N-acetyl-alpha-D-glucosamine. Asparagine 239 is a Mg(2+) binding site. The linker stretch occupies residues 242–262 (AQLAAAEEVLYGRIADRLRKS). The segment at 263–473 (GVTIRTSARI…KARLKDAAKK (211 aa)) is N-acetyltransferase. UDP-N-acetyl-alpha-D-glucosamine-binding residues include arginine 343 and lysine 361. Histidine 373 functions as the Proton acceptor in the catalytic mechanism. Tyrosine 376 and asparagine 387 together coordinate UDP-N-acetyl-alpha-D-glucosamine. Residues alanine 390, 396-397 (NY), serine 415, threonine 433, and arginine 450 contribute to the acetyl-CoA site.

It in the N-terminal section; belongs to the N-acetylglucosamine-1-phosphate uridyltransferase family. This sequence in the C-terminal section; belongs to the transferase hexapeptide repeat family. In terms of assembly, homotrimer. Mg(2+) is required as a cofactor.

The protein resides in the cytoplasm. The catalysed reaction is alpha-D-glucosamine 1-phosphate + acetyl-CoA = N-acetyl-alpha-D-glucosamine 1-phosphate + CoA + H(+). It catalyses the reaction N-acetyl-alpha-D-glucosamine 1-phosphate + UTP + H(+) = UDP-N-acetyl-alpha-D-glucosamine + diphosphate. It functions in the pathway nucleotide-sugar biosynthesis; UDP-N-acetyl-alpha-D-glucosamine biosynthesis; N-acetyl-alpha-D-glucosamine 1-phosphate from alpha-D-glucosamine 6-phosphate (route II): step 2/2. It participates in nucleotide-sugar biosynthesis; UDP-N-acetyl-alpha-D-glucosamine biosynthesis; UDP-N-acetyl-alpha-D-glucosamine from N-acetyl-alpha-D-glucosamine 1-phosphate: step 1/1. Its pathway is bacterial outer membrane biogenesis; LPS lipid A biosynthesis. Functionally, catalyzes the last two sequential reactions in the de novo biosynthetic pathway for UDP-N-acetylglucosamine (UDP-GlcNAc). The C-terminal domain catalyzes the transfer of acetyl group from acetyl coenzyme A to glucosamine-1-phosphate (GlcN-1-P) to produce N-acetylglucosamine-1-phosphate (GlcNAc-1-P), which is converted into UDP-GlcNAc by the transfer of uridine 5-monophosphate (from uridine 5-triphosphate), a reaction catalyzed by the N-terminal domain. In Sorangium cellulosum (strain So ce56) (Polyangium cellulosum (strain So ce56)), this protein is Bifunctional protein GlmU.